The chain runs to 258 residues: Capsid protein (258 aa).

Positions Lys3–Arg20 match the Bipartite nuclear localization signal motif. Positions Arg41–Met55 match the Nuclear localization signal motif. A zinc finger lies at Cys69–His86. The short motif at Leu102–Met123 is the Nuclear export signal element. The Bipartite nuclear localization signal motif lies at Lys202–Arg249.

The protein belongs to the geminiviridae capsid protein family. In terms of assembly, homomultimer. Binds to single-stranded and double-stranded viral DNA. Interacts (via nuclear localization signals) with host importin alpha-1a.

The protein localises to the virion. Its subcellular location is the host nucleus. Its function is as follows. Encapsidates the viral DNA into characteristic twinned ('geminate') particles. Binds the genomic viral ssDNA and shuttles it into and out of the cell nucleus. The CP of bipartite geminiviruses is not required for cell-to-cell or systemic movement. This is Capsid protein from Hewittia sublobata (Coralbush).